We begin with the raw amino-acid sequence, 284 residues long: Ermin (284 aa).

Positions 1 to 61 (MTDVPATFTQ…APTKGSQEER (61 aa)) are disordered. Position 73 is a phosphoserine (Ser73). Positions 108-251 (TFREGRQWEK…PTLGKKSDIS (144 aa)) are disordered. 2 stretches are compositionally biased toward basic and acidic residues: residues 126–140 (EIRR…QPLK) and 171–183 (LHSK…KVWD). The segment covering 184-200 (EEIDDDDDDNCNDDEDE) has biased composition (acidic residues). The segment covering 201–220 (VRVIEFKKKHEEVSQFKEEG) has biased composition (basic and acidic residues). Phosphoserine occurs at positions 214, 226, 230, and 233. Residues 225-235 (DSPLSSASSQA) are compositionally biased toward low complexity. Thr237 bears the Phosphothreonine mark. A binds actin region spans residues 265-284 (KIRKGNTKQRIDEFESMMHL).

As to quaternary structure, binds actin.

Its subcellular location is the cytoplasm. It is found in the cytoskeleton. In terms of biological role, plays a role in cytoskeletal rearrangements during the late wrapping and/or compaction phases of myelinogenesis as well as in maintenance and stability of myelin sheath in the adult. May play an important role in late-stage oligodendroglia maturation, myelin/Ranvier node formation during CNS development, and in the maintenance and plasticity of related structures in the mature CNS. In Pongo abelii (Sumatran orangutan), this protein is Ermin (ERMN).